The sequence spans 432 residues: Pachytene checkpoint protein 2 homolog (432 aa).

Residue 179-186 participates in ATP binding; sequence GPPGTGKT.

This sequence belongs to the AAA ATPase family. PCH2 subfamily.

In terms of biological role, plays a key role in chromosome recombination and chromosome structure development during meiosis. Required at early steps in meiotic recombination that leads to non-crossovers pathways. Also needed for efficient completion of homologous synapsis by influencing crossover distribution along the chromosomes affecting both crossovers and non-crossovers pathways. The sequence is that of Pachytene checkpoint protein 2 homolog (trip13) from Xenopus tropicalis (Western clawed frog).